The following is an 844-amino-acid chain: MAAFSQYPLSTGWSFKDSDDQSPEAWMPVPVVPSVAHQDLQANQKLKNPYIGFNELDARWVNDKSWTYRTVFQKPAVAAGSSIILAFDGLDTFATVKLDGSVILQSDNMFLAHRVDVTKALEAEGDHVLEIDFDCAMRRARELREKDTKHNWASFNGDPARMAVRKAQYHWGWDWGPLLSTAGIWREVRLEVYSAKISDLWTEVELASDHQTARVSAFTEVDAADSVDSYKASFLLSLHGKEVAREVATLKDKVAKVTFDVTQPSLWWPNGYGDPALYEISVSLEKEDCEIHSVSKKIGIRTAELIQQPDRHGKSFFFRINGVDVFCGGSCWIPADNLLPSITAERYRKWIELMVAGRQVMIRVWGGGCYEDDSFYQACDELGVLVWQDFMFGCGNYPTWPELLESIEKEANYNVRRLRHHPSIVVYVGNNEDYQVQESAGLVYDYEDKNPENWLKTDFPARYIYEKLLPSVVEKLSPKTVYHPGSPWGDGKITSDPTVGDMHQWNVWHGTQEKYQIFDTLGGRFNSEFGMEAFPHMSTIEYFVENEADKYPQSHVLDFHNKADGHERRIATYLVENLRTATDLETYVYLTQVVQAETMMFGYRGWRRQWGDERHCGGALLWQLNDCWPTISWAIVDYFLRPKPAFYAVARVLKPIAVGVRREHHDWSVTHAQPPKTSKYELWIASSLQKETVGTIELRFLSVNTGLDVRAPILRDNVKIVPNGTTNILEGVINHKAQPEPHVLAARLWVDGEVTARDVDWPQPFKYLDLSDRGLEVNKVSESGNEQKLLITAKKPVKCLVFEERDGIRVSDSAMDIVPGDGQTVTVTGLKAGDAPLKYKYLGQ.

Residue E432 is the Proton donor of the active site. N723 is a glycosylation site (N-linked (GlcNAc...) asparagine).

It belongs to the glycosyl hydrolase 2 family. Beta-mannosidase B subfamily.

The enzyme catalyses Hydrolysis of terminal, non-reducing beta-D-mannose residues in beta-D-mannosides.. It participates in glycan metabolism; N-glycan degradation. Exoglycosidase that cleaves the single beta-linked mannose residue from the non-reducing end of beta-mannosidic oligosaccharides of various complexity and length. Prefers mannobiose over mannotriose and has no activity against polymeric mannan. Is also severely restricted by galactosyl substitutions at the +1 subsite. The polypeptide is Beta-mannosidase B (mndB) (Aspergillus flavus (strain ATCC 200026 / FGSC A1120 / IAM 13836 / NRRL 3357 / JCM 12722 / SRRC 167)).